Reading from the N-terminus, the 491-residue chain is UDP-N-acetylmuramate--L-alanine ligase (491 aa).

Residue 126–132 (GTHGKTT) coordinates ATP.

Belongs to the MurCDEF family.

Its subcellular location is the cytoplasm. The enzyme catalyses UDP-N-acetyl-alpha-D-muramate + L-alanine + ATP = UDP-N-acetyl-alpha-D-muramoyl-L-alanine + ADP + phosphate + H(+). It participates in cell wall biogenesis; peptidoglycan biosynthesis. In terms of biological role, cell wall formation. The sequence is that of UDP-N-acetylmuramate--L-alanine ligase from Salmonella arizonae (strain ATCC BAA-731 / CDC346-86 / RSK2980).